The following is a 381-amino-acid chain: Homoserine O-succinyltransferase (381 aa).

In terms of domain architecture, AB hydrolase-1 spans 45–360 (NAVLVCHALN…PHGHDAFLLD (316 aa)). Ser151 (nucleophile) is an active-site residue. Arg221 contacts substrate. Residues Asp321 and His354 contribute to the active site. Asp355 contributes to the substrate binding site.

Belongs to the AB hydrolase superfamily. MetX family. Homodimer.

Its subcellular location is the cytoplasm. It catalyses the reaction L-homoserine + succinyl-CoA = O-succinyl-L-homoserine + CoA. It participates in amino-acid biosynthesis; L-methionine biosynthesis via de novo pathway; O-succinyl-L-homoserine from L-homoserine: step 1/1. In terms of biological role, transfers a succinyl group from succinyl-CoA to L-homoserine, forming succinyl-L-homoserine. In Burkholderia mallei (strain NCTC 10247), this protein is Homoserine O-succinyltransferase.